A 121-amino-acid chain; its full sequence is Small ribosomal subunit protein uS13 (121 aa).

The interval 98 to 121 is disordered; it reads RGQKTRNNAHTVKGKPKSIAGKKK. Basic residues predominate over residues 109–121; that stretch reads VKGKPKSIAGKKK.

The protein belongs to the universal ribosomal protein uS13 family. In terms of assembly, part of the 30S ribosomal subunit. Forms a loose heterodimer with protein S19. Forms two bridges to the 50S subunit in the 70S ribosome.

Located at the top of the head of the 30S subunit, it contacts several helices of the 16S rRNA. In the 70S ribosome it contacts the 23S rRNA (bridge B1a) and protein L5 of the 50S subunit (bridge B1b), connecting the 2 subunits; these bridges are implicated in subunit movement. Contacts the tRNAs in the A and P-sites. The sequence is that of Small ribosomal subunit protein uS13 from Phytoplasma australiense.